The sequence spans 852 residues: Thrombospondin type-1 domain-containing protein 1 (852 aa).

The signal sequence occupies residues 1–24 (MKPMLKDFSNLLLVVLCDYVLGEA). Residues 25 to 413 (EYLLLREPGH…QPQGPVKSNN (389 aa)) lie on the Extracellular side of the membrane. N-linked (GlcNAc...) asparagine glycans are attached at residues Asn39, Asn53, Asn58, Asn69, Asn80, Asn135, and Asn304. One can recognise a TSP type-1 domain in the interval 340-393 (TETWGLWQPWSQCSATCGDGVRERRRVCLTSFPSSPVCPGMSLEASLCSLEECA). 3 disulfides stabilise this stretch: Cys352–Cys387, Cys356–Cys392, and Cys367–Cys377. Residues 414 to 434 (IVTVTGISLCLFIIIATVLIT) form a helical membrane-spanning segment. The Cytoplasmic segment spans residues 435–852 (LWRRFGRPAK…STLSVEKLVI (418 aa)). Disordered stretches follow at residues 444–517 (KCST…ESFQ) and 624–799 (LIRK…RKDK). Ser463 carries the post-translational modification Phosphoserine. Positions 645–654 (ARNAHFRRTA) are enriched in basic residues. A compositionally biased stretch (basic and acidic residues) spans 655–669 (SFHEARQARPFRERS). Positions 670–685 (MSTLTPRQAPAYSSRT) are enriched in polar residues. Basic and acidic residues predominate over residues 686–696 (RTCEQAEDRFR). Composition is skewed to polar residues over residues 766-778 (SHKS…SSPI) and 785-794 (QRVSSLSPSQ).

As to quaternary structure, part of a complex composed of THSD1, PTK2/FAK1, TLN1 and VCL. Interacts with TLN1.

The protein resides in the endosome membrane. It localises to the cell junction. The protein localises to the focal adhesion. It is found in the membrane. Its subcellular location is the secreted. Is a positive regulator of nascent focal adhesion assembly, involved in the modulation of endothelial cell attachment to the extracellular matrix. In Homo sapiens (Human), this protein is Thrombospondin type-1 domain-containing protein 1 (THSD1).